The chain runs to 523 residues: ATP synthase subunit alpha (523 aa).

Position 179 to 186 (179 to 186 (GDRQTGKT)) interacts with ATP.

Belongs to the ATPase alpha/beta chains family. In terms of assembly, F-type ATPases have 2 components, CF(1) - the catalytic core - and CF(0) - the membrane proton channel. CF(1) has five subunits: alpha(3), beta(3), gamma(1), delta(1), epsilon(1). CF(0) has three main subunits: a(1), b(2) and c(9-12). The alpha and beta chains form an alternating ring which encloses part of the gamma chain. CF(1) is attached to CF(0) by a central stalk formed by the gamma and epsilon chains, while a peripheral stalk is formed by the delta and b chains.

The protein resides in the cell inner membrane. The catalysed reaction is ATP + H2O + 4 H(+)(in) = ADP + phosphate + 5 H(+)(out). In terms of biological role, produces ATP from ADP in the presence of a proton gradient across the membrane. The alpha chain is a regulatory subunit. This chain is ATP synthase subunit alpha, found in Vibrio parahaemolyticus serotype O3:K6 (strain RIMD 2210633).